Consider the following 589-residue polypeptide: PTS system mannitol-specific EIICB component (589 aa).

The Cytoplasmic segment spans residues 1–25 (MEEKVSLKVRVQKLGTSLSNMVMPN). Residues 14 to 347 (LGTSLSNMVM…LHADKSTEDS (334 aa)) enclose the PTS EIIC type-2 domain. Residues 26–47 (IGAFIAWGVLTALFIADGYLPN) traverse the membrane as a helical segment. Over 48–51 (EQLA) the chain is Extracellular. The chain crosses the membrane as a helical span at residues 52–72 (TVVGPMLTYLLPILIGYTGGY). At 73 to 135 (MIHGQRGAVV…PGFEMLVNNF (63 aa)) the chain is on the cytoplasmic side. A helical transmembrane segment spans residues 136–157 (SAGLVGFALLLLAFYAIGPVVS). Topologically, residues 158 to 166 (TLTGAVGNG) are extracellular. Residues 167–187 (VEAIVNARLLPMANIIIEPAK) traverse the membrane as a helical segment. Residues 188–274 (VLFLNNALNH…VMMKPTLFLA (87 aa)) are Cytoplasmic-facing. Residues 275 to 294 (AMAGGISGTFTFQLLDAGLK) traverse the membrane as a helical segment. The Extracellular segment spans residues 295–316 (SPASPGSIIAIMATAPKGVWPH). The chain crosses the membrane as a helical span at residues 317-338 (LNILLGVLVAAVVSFLIAALIL). Over 339-589 (HADKSTEDSL…YDKMAARMYK (251 aa)) the chain is Cytoplasmic. In terms of domain architecture, PTS EIIB type-2 spans 381-476 (EKIIFACDAG…SLTGASPIAE (96 aa)). Cys-387 serves as the catalytic Phosphocysteine intermediate; for EIIB activity. At Cys-387 the chain carries Phosphocysteine; by EIIA.

Homodimer.

It localises to the cell membrane. It carries out the reaction D-mannitol(out) + N(pros)-phospho-L-histidyl-[protein] = D-mannitol 1-phosphate(in) + L-histidyl-[protein]. Functionally, the phosphoenolpyruvate-dependent sugar phosphotransferase system (sugar PTS), a major carbohydrate active transport system, catalyzes the phosphorylation of incoming sugar substrates concomitantly with their translocation across the cell membrane. The enzyme II CmtAB PTS system is involved in D-mannitol transport. This Streptococcus pneumoniae (strain ATCC BAA-255 / R6) protein is PTS system mannitol-specific EIICB component (mtlA).